The primary structure comprises 239 residues: Ion-translocating oxidoreductase complex subunit E (239 aa).

Transmembrane regions (helical) follow at residues 41-61 (LGLG…VSLV), 71-91 (LPAF…LMQA), 95-115 (ELYQ…VILG), 130-150 (SFDG…LGGL), and 184-204 (GFLL…LIAL).

It belongs to the NqrDE/RnfAE family. As to quaternary structure, the complex is composed of six subunits: RnfA, RnfB, RnfC, RnfD, RnfE and RnfG.

It localises to the cell inner membrane. Functionally, part of a membrane-bound complex that couples electron transfer with translocation of ions across the membrane. The sequence is that of Ion-translocating oxidoreductase complex subunit E from Pseudomonas paraeruginosa (strain DSM 24068 / PA7) (Pseudomonas aeruginosa (strain PA7)).